A 239-amino-acid polypeptide reads, in one-letter code: Flagellar L-ring protein (239 aa).

An N-terminal signal peptide occupies residues 1–16 (MKPVILATASALLLAA). A lipid anchor (N-palmitoyl cysteine) is attached at Cys-17. A lipid anchor (S-diacylglycerol cysteine) is attached at Cys-17. The span at 120 to 138 (SGSTSGSASGNLGLTGDTS) shows a compositional bias: polar residues. Positions 120 to 145 (SGSTSGSASGNLGLTGDTSTDGKGKI) are disordered.

This sequence belongs to the FlgH family. The basal body constitutes a major portion of the flagellar organelle and consists of four rings (L,P,S, and M) mounted on a central rod.

It localises to the cell outer membrane. Its subcellular location is the bacterial flagellum basal body. In terms of biological role, assembles around the rod to form the L-ring and probably protects the motor/basal body from shearing forces during rotation. This chain is Flagellar L-ring protein, found in Azorhizobium caulinodans (strain ATCC 43989 / DSM 5975 / JCM 20966 / LMG 6465 / NBRC 14845 / NCIMB 13405 / ORS 571).